The chain runs to 220 residues: Pyridoxine/pyridoxamine 5'-phosphate oxidase (220 aa).

FMN contacts are provided by residues 69-74 (RVVLLK), 84-85 (YT), R90, K91, and Q113. K74 lines the substrate pocket. The substrate site is built by Y131, R135, and S139. FMN is bound by residues 148-149 (QS) and W193. 199-201 (RLH) is a binding site for substrate. R203 is a binding site for FMN.

This sequence belongs to the pyridoxamine 5'-phosphate oxidase family. Homodimer. It depends on FMN as a cofactor.

It carries out the reaction pyridoxamine 5'-phosphate + O2 + H2O = pyridoxal 5'-phosphate + H2O2 + NH4(+). It catalyses the reaction pyridoxine 5'-phosphate + O2 = pyridoxal 5'-phosphate + H2O2. The protein operates within cofactor metabolism; pyridoxal 5'-phosphate salvage; pyridoxal 5'-phosphate from pyridoxamine 5'-phosphate: step 1/1. Its pathway is cofactor metabolism; pyridoxal 5'-phosphate salvage; pyridoxal 5'-phosphate from pyridoxine 5'-phosphate: step 1/1. Functionally, catalyzes the oxidation of either pyridoxine 5'-phosphate (PNP) or pyridoxamine 5'-phosphate (PMP) into pyridoxal 5'-phosphate (PLP). This is Pyridoxine/pyridoxamine 5'-phosphate oxidase from Myxococcus xanthus.